The following is a 391-amino-acid chain: Putative alpha-ketoglutarate-dependent sulfonate dioxygenase (391 aa).

Fe cation-binding residues include His204 and Asp206. 2-oxoglutarate is bound by residues Thr231 and Trp338. His353 contacts Fe cation. 2-oxoglutarate is bound by residues Arg364 and Arg368.

This sequence belongs to the TfdA dioxygenase family. Requires Fe(2+) as cofactor.

The protein operates within organosulfur degradation; alkanesulfonate degradation. In terms of biological role, acts as an alpha-ketoglutarate-dependent dioxygenase active on sulfonates. The sequence is that of Putative alpha-ketoglutarate-dependent sulfonate dioxygenase from Schizosaccharomyces pombe (strain 972 / ATCC 24843) (Fission yeast).